Reading from the N-terminus, the 511-residue chain is GMP synthase [glutamine-hydrolyzing] (511 aa).

In terms of domain architecture, Glutamine amidotransferase type-1 spans 5–195 (DIIVLDFGSQ…AKYICDCEST (191 aa)). The active-site Nucleophile is the cysteine 82. Residues histidine 169 and glutamate 171 contribute to the active site. Residues 196–386 (WNMGNFAKIK…LGLSPDLVYR (191 aa)) enclose the GMPS ATP-PPase domain. Residue 223–229 (SGGVDSS) coordinates ATP.

Homodimer.

It catalyses the reaction XMP + L-glutamine + ATP + H2O = GMP + L-glutamate + AMP + diphosphate + 2 H(+). Its pathway is purine metabolism; GMP biosynthesis; GMP from XMP (L-Gln route): step 1/1. In terms of biological role, catalyzes the synthesis of GMP from XMP. This Campylobacter hominis (strain ATCC BAA-381 / DSM 21671 / CCUG 45161 / LMG 19568 / NCTC 13146 / CH001A) protein is GMP synthase [glutamine-hydrolyzing].